Reading from the N-terminus, the 833-residue chain is Leucine--tRNA ligase (833 aa).

A 'HIGH' region motif is present at residues 41–52 (PYPSGAGLHVGH). The 'KMSKS' region signature appears at 610–614 (KMSKS). Lys613 serves as a coordination point for ATP.

Belongs to the class-I aminoacyl-tRNA synthetase family.

The protein resides in the cytoplasm. It carries out the reaction tRNA(Leu) + L-leucine + ATP = L-leucyl-tRNA(Leu) + AMP + diphosphate. The polypeptide is Leucine--tRNA ligase (Streptococcus pyogenes serotype M18 (strain MGAS8232)).